Here is a 588-residue protein sequence, read N- to C-terminus: Pescadillo homolog (588 aa).

Positions 1–54 (MGGLEKKKYERGSATNYITRNKARKKLQLSLADFRRLCILKGIYPHEPKHKKKV) are required for 28S ribosomal RNA processing. Positions 1 to 257 (MGGLEKKKYE…PKLEGQAQAE (257 aa)) are sufficient for nucleolar localization. An N6-acetyllysine modification is found at Lys98. Residues 294–314 (EAEVDEFPTDGEMSAQEEDRR) are disordered. The segment at 306 to 415 (MSAQEEDRRK…LLLPVAEYFS (110 aa)) is sufficient for interaction with MAP1B. The BRCT domain occupies 322–415 (KHKKLFEGLK…LLLPVAEYFS (94 aa)). The interval 448–515 (GEDPGNLNES…GKKPRVMAGT (68 aa)) is disordered. The segment covering 456-486 (ESEEEEEEDDNNEGDGDEEGENEEEEEDAEA) has biased composition (acidic residues). The segment covering 487–508 (GSEKEEEARLAALEEQRMEGKK) has biased composition (basic and acidic residues). Lys517 is covalently cross-linked (Glycyl lysine isopeptide (Lys-Gly) (interchain with G-Cter in SUMO1); alternate). Lys517 is covalently cross-linked (Glycyl lysine isopeptide (Lys-Gly) (interchain with G-Cter in SUMO2); alternate). A required for 28S ribosomal RNA processing region spans residues 539-588 (MMKKREKYLYQKIMFGKRRKIREANKLAEKRKAHDEAVRSEKKAKKARPE). The tract at residues 565–588 (LAEKRKAHDEAVRSEKKAKKARPE) is disordered.

This sequence belongs to the pescadillo family. Component of the PeBoW complex, composed of BOP1, PES1 and WDR12. The complex is held together by BOP1, which interacts with PES1 via its N-terminal domain and with WDR12 via a high-affinity interaction between the seven-bladed beta-propeller domains of the 2 proteins. The PeBoW complex associates with the 66S pre-ribosome. The PeBoW complex also associates with DDX27, PES1 interacts directly with DDX27. Interacts with IRS1 and UBTF. May interact with MAP1B. In terms of processing, sumoylated. In terms of tissue distribution, significant levels are detected in a variety of cancer cell lines, including glioblastoma, breast carcinoma, colon carcinoma and cervical carcinoma cells. Levels are abnormally elevated in malignant tumors of astrocytic origin.

It localises to the nucleus. The protein localises to the nucleolus. Its subcellular location is the nucleoplasm. It is found in the chromosome. Functionally, component of the PeBoW complex, which is required for maturation of 28S and 5.8S ribosomal RNAs and formation of the 60S ribosome. The protein is Pescadillo homolog of Homo sapiens (Human).